Consider the following 492-residue polypeptide: 6-phosphogluconate dehydrogenase, decarboxylating 2 (492 aa).

NADP(+)-binding positions include 12–17, 35–37, 77–79, and Asn-105; these read GLAVMG, NRT, and IKA. Residues Asn-105 and 131–133 each bind substrate; that span reads SGG. Catalysis depends on Lys-185, which acts as the Proton acceptor. A substrate-binding site is contributed by 188–189; the sequence is HN. The Proton donor role is filled by Glu-192. The substrate site is built by Tyr-193, Lys-262, Arg-289, Arg-449, and His-455.

It belongs to the 6-phosphogluconate dehydrogenase family. In terms of assembly, homodimer.

The enzyme catalyses 6-phospho-D-gluconate + NADP(+) = D-ribulose 5-phosphate + CO2 + NADPH. Its pathway is carbohydrate degradation; pentose phosphate pathway; D-ribulose 5-phosphate from D-glucose 6-phosphate (oxidative stage): step 3/3. Functionally, catalyzes the oxidative decarboxylation of 6-phosphogluconate to ribulose 5-phosphate and CO(2), with concomitant reduction of NADP to NADPH. The chain is 6-phosphogluconate dehydrogenase, decarboxylating 2 (GND2) from Saccharomyces cerevisiae (strain ATCC 204508 / S288c) (Baker's yeast).